The following is a 436-amino-acid chain: Trigger factor (436 aa).

In terms of domain architecture, PPIase FKBP-type spans 162-247 (GDRVIIDFEG…LNNVSEATLP (86 aa)).

It belongs to the FKBP-type PPIase family. Tig subfamily.

Its subcellular location is the cytoplasm. It catalyses the reaction [protein]-peptidylproline (omega=180) = [protein]-peptidylproline (omega=0). Involved in protein export. Acts as a chaperone by maintaining the newly synthesized protein in an open conformation. Functions as a peptidyl-prolyl cis-trans isomerase. In Neisseria meningitidis serogroup C (strain 053442), this protein is Trigger factor.